We begin with the raw amino-acid sequence, 513 residues long: Mesoderm induction early response protein 1 (513 aa).

The span at 1–16 shows a compositional bias: low complexity; sequence MAEPSVESSSPGGSAT. The disordered stretch occupies residues 1 to 174; it reads MAEPSVESSS…EEESEEDEDY (174 aa). Basic and acidic residues-rich tracts occupy residues 17 to 36 and 46 to 63; these read SDDH…FDDE and EGER…RESD. Acidic residues predominate over residues 82-107; that stretch reads QEDDDDEDEEEEEEEGEDDDDVDNDD. A compositionally biased stretch (polar residues) spans 131–146; the sequence is QSSNDDPAPSVASQDP. The tract at residues 157-261 is interaction with HDAC1; the sequence is YFDTNSEIEE…IKDNEQALYE (105 aa). The span at 162–174 shows a compositional bias: acidic residues; that stretch reads SEIEEESEEDEDY. The region spanning 182-280 is the ELM2 domain; that stretch reads KEIMVGSMFQ…ESLRRLRFNV (99 aa). One can recognise an SANT domain in the interval 285-337; the sequence is EELSVWTEEECRNFEQGLKVYGKDFHVIQANKVRTRSVGECVAFYYMWKKSER. The disordered stretch occupies residues 368–513; sequence ESESAASSRA…KLEELETLDD (146 aa). Composition is skewed to basic and acidic residues over residues 416–425 and 463–476; these read PSKDEAKPEG and SRSE…NERP. The segment covering 483–500 has biased composition (polar residues); that stretch reads NSNGKESPGSSEFFQEAN.

The protein resides in the nucleus. Its function is as follows. Transcriptional repressor regulating the expression of a number of genes. Probably functions through recruitment of histone deacetylases involved in chromatin silencing. The chain is Mesoderm induction early response protein 1 (MIER1) from Gallus gallus (Chicken).